The following is a 375-amino-acid chain: Putrescine N-methyltransferase 1 (375 aa).

2 stretches are compositionally biased toward polar residues: residues 24-50 and 57-77; these read HQNGTSEHLNGYQNGTSKHQNGHQNGT and HQNGTSEQQNGTISHDNGNEL. The tract at residues 24 to 77 is disordered; the sequence is HQNGTSEHLNGYQNGTSKHQNGHQNGTFEHRNGHQNGTSEQQNGTISHDNGNEL. The PABS domain occupies 86–323; the sequence is PGWFSEFSAL…GVIGYMLCST (238 aa). Residues Q117, E192, and 223–224 each bind S-adenosyl-L-methionine; that span reads DG. D242 acts as the Proton acceptor in catalysis. Residue Y311 participates in S-adenosyl-L-methionine binding.

This sequence belongs to the class I-like SAM-binding methyltransferase superfamily. Putrescine methyltransferase family. As to expression, predominantly expressed in roots.

The enzyme catalyses putrescine + S-adenosyl-L-methionine = N-methylputrescine + S-adenosyl-L-homocysteine + H(+). The protein operates within alkaloid biosynthesis; nicotine biosynthesis. In terms of biological role, involved in the biosynthesis of pyridine alkaloid natural products, leading mainly to the production of anabasine, anatabine, nicotine and nornicotine, effective deterrents against herbivores with antiparasitic and pesticide properties (neurotoxins); nornicotine serves as the precursor in the synthesis of the carcinogen compound N'-nitrosonornicotine (NNN). Methyltransferase that mediates the conversion of putrescine to N-methylputrescine. Promotes leaves ripening. This chain is Putrescine N-methyltransferase 1, found in Nicotiana tabacum (Common tobacco).